Reading from the N-terminus, the 61-residue chain is Large ribosomal subunit protein bL32 (61 aa).

The protein belongs to the bacterial ribosomal protein bL32 family.

This Ehrlichia chaffeensis (strain ATCC CRL-10679 / Arkansas) protein is Large ribosomal subunit protein bL32.